Reading from the N-terminus, the 148-residue chain is TIQDAPDVAAEKARFFLAYQAALPATPPKPADPPKWYGPLASKIPAGLPGSSANVALTADLSAARNAFYNTYNAQVAAVAPKSDGPVFAVVPVATSAQWTGPVAATLPAGVPGSSPNVAETADVLNAKNAFFTTYNQQVAAVAPAPKV.

In terms of tissue distribution, calcified shell.

The sequence is that of Cuticle protein CP1499 from Cancer pagurus (Rock crab).